Consider the following 195-residue polypeptide: Putative manganese efflux pump MntP (195 aa).

6 consecutive transmembrane segments (helical) span residues 4-24, 39-59, 64-84, 120-140, 145-165, and 175-195; these read ILIT…SLAM, FVLT…NLGL, FLGV…GWQM, ILLL…TLGT, ILIT…VGFA, and GSYA…KFVV.

This sequence belongs to the MntP (TC 9.B.29) family.

The protein resides in the cell membrane. Its function is as follows. Probably functions as a manganese efflux pump. This Syntrophomonas wolfei subsp. wolfei (strain DSM 2245B / Goettingen) protein is Putative manganese efflux pump MntP.